The sequence spans 276 residues: Caspase-6 (276 aa).

Residues 1–5 (MTETD) constitute a propeptide that is removed on maturation. The segment at 25–27 (KRR) is tri-arginine exosite. Serine 62 carries the post-translational modification Phosphoserine. Histidine 104 is a catalytic residue. The tract at residues 108–125 (NHVYAYDAKIEIQTLTGL) is 130's region. Cysteine 146 is a catalytic residue. The propeptide occupies 163 to 175 (HQTDKLDNVTQVD). Serine 239 is subject to Phosphoserine. Residues cysteine 246 and cysteine 259 are each lipidated (S-palmitoyl cysteine).

It belongs to the peptidase C14A family. As to quaternary structure, heterotetramer that consists of two anti-parallel arranged heterodimers, each one formed by a 18 kDa (p18) and a 11 kDa (p11) subunit. Interacts with BIRC6/bruce. Interacts with RIPK3. Heterotetramer that consists of two anti-parallel arranged heterodimers, each one formed by a 18 kDa (Caspase-6 subunit p18) and a 11 kDa (Caspase-6 subunit p11) subunit. In terms of processing, phosphorylated by NUAK1; phosphorylation inhibits self-activation. Phosphorylation at Ser-239 by AMP-activated protein kinase (PRKAA1 or PRKAA2) inhibits autocleavage, preventing caspase activation, thereby preventing hepatocyte apoptosis. Post-translationally, palmitoylation by ZDHHC17 blocks dimerization and subsequent activation, leading to inhibit the cysteine protease activity. Can be cleaved and activated by different caspases, depending on the context. Cleaved and activated by caspase-8 (CASP8) and subsequently by caspase-3 (CASP3). Can also undergo autoactivation by mediating autocleavage at Asp-162 and Asp-175, while it is not able to cleave its N-terminal disordered prodomain. Cleaved and activated by CASP1, possibly in the context of inflammation. As to expression, highly expressed in lung, liver, kidney, testis, and heart. Lower levels in spleen, skeletal muscle and brain. Expressed in neurons.

Its subcellular location is the cytoplasm. The protein localises to the nucleus. It carries out the reaction Strict requirement for Asp at position P1 and has a preferred cleavage sequence of Val-Glu-His-Asp-|-.. Its activity is regulated as follows. During activation, the N-terminal disordered prodomain is removed by cleavage. Concomitantly, double cleavage gives rise to a large 18-kDa and a small 11-kDa subunit. The two large and two small subunits then assemble to form the active CASP6 complex. Can be cleaved and activated by different caspases, depending on the context. Cleaved and activated by caspase-8 (CASP8) and subsequently by caspase-3 (CASP3). Can also undergo autoactivation by mediating autocleavage at Asp-162 and Asp-175, while it is not able to cleave its N-terminal disordered prodomain. Intramolecular cleavage at Asp-175 is a prerequisite for CASP6 self-activation. Cleaved and activated by CASP1 in neurons, possibly in the context of inflammation. Phosphorylation at Ser-239 inhibits autocleavage, preventing caspase activation. Its function is as follows. Cysteine protease that plays essential roles in programmed cell death, axonal degeneration, development and innate immunity. Acts as a non-canonical executioner caspase during apoptosis: localizes in the nucleus and cleaves the nuclear structural protein NUMA1 and lamin A/LMNA thereby inducing nuclear shrinkage and fragmentation. Lamin-A/LMNA cleavage is required for chromatin condensation and nuclear disassembly during apoptotic execution. Acts as a regulator of liver damage by promoting hepatocyte apoptosis: in absence of phosphorylation by AMP-activated protein kinase (AMPK), catalyzes cleavage of BID, leading to cytochrome c release, thereby participating in nonalcoholic steatohepatitis. Cleaves PARK7/DJ-1 in cells undergoing apoptosis. Involved in intrinsic apoptosis by mediating cleavage of RIPK1. Furthermore, cleaves many transcription factors such as NF-kappa-B and cAMP response element-binding protein/CREBBP. Cleaves phospholipid scramblase proteins XKR4 and XKR9. In addition to apoptosis, involved in different forms of programmed cell death. Plays an essential role in defense against viruses by acting as a central mediator of the ZBP1-mediated pyroptosis, apoptosis, and necroptosis (PANoptosis), independently of its cysteine protease activity. PANoptosis is a unique inflammatory programmed cell death, which provides a molecular scaffold that allows the interactions and activation of machinery required for inflammasome/pyroptosis, apoptosis and necroptosis. Mechanistically, interacts with RIPK3 and enhances the interaction between RIPK3 and ZBP1, leading to ZBP1-mediated inflammasome activation and cell death. Plays an essential role in axon degeneration during axon pruning which is the remodeling of axons during neurogenesis but not apoptosis. Regulates B-cell programs both during early development and after antigen stimulation. (Microbial infection) Proteolytically cleaves the N protein of coronaviruses. The cleavage leads to two fragments and modulates coronavirus replication by regulating IFN signaling. The two fragments produced by the cleavage interact with IRF3 inhibiting its nuclear translocation after activation and reduce the expression of IFNB and IFN-stimulated genes. This is Caspase-6 from Mus musculus (Mouse).